Here is a 121-residue protein sequence, read N- to C-terminus: Small ribosomal subunit protein uS13 (121 aa).

The interval 93–121 (RGLPMRGQRTRTNARTRKGPRKAAQSLKK) is disordered.

This sequence belongs to the universal ribosomal protein uS13 family. As to quaternary structure, part of the 30S ribosomal subunit. Forms a loose heterodimer with protein S19. Forms two bridges to the 50S subunit in the 70S ribosome.

Functionally, located at the top of the head of the 30S subunit, it contacts several helices of the 16S rRNA. In the 70S ribosome it contacts the 23S rRNA (bridge B1a) and protein L5 of the 50S subunit (bridge B1b), connecting the 2 subunits; these bridges are implicated in subunit movement. Contacts the tRNAs in the A and P-sites. The chain is Small ribosomal subunit protein uS13 from Variovorax paradoxus (strain S110).